A 1573-amino-acid chain; its full sequence is MSNESNIITVPILGKDTVRVGFGIHQYICTEILENFKSSTYVVITDSNIAPLYLEKIESTFNKSIKDAKAEARLLTYVIPPGESSKCRAMKAEIEDWLLTQSCTRDTILIAMGGGVIGDLVGYVAASFMRGIRFIQMPTTLLAMVDSSIGGKTGIDTPLGKNLVGAFWQPLRVYVDMVFLHTLPPRQVINGLSEIIKTAAMWNENDFQLLENNSAVLLDALNKPSVPGEYKFDSIKPLLQKIILSSIRTKCEVVTLDEHEGGLRNLLNFGHSIGHAYEAILYPQILHGECVAIGMVKEAELARYLGILKPNAVGRLTKCLVSYNLPISVNDPKVKKYASFKHCPVEKLIEYMAVDKKNQGSKKRIVILKAIGETYEKHATVVSDDDIRFILSRDVKVDEFTKSSWDVVVTPPGSKSISNRALVLAAMGNGTCRLTNMLHSDDTQFMMSALESLGAATFSWEDGGETLVVKGNGGKLAVPKEELYLGNAGTAARFLTGIAALVSSKDGAKVVLTGNHRMKVRPIGPLVDALRANGCEINYLEKQGSLPLDLSSKNGLKGGIIELAATVSSQYVSSILMCAPYASQPVTLKLVGGKPISQLYIDMTIAMMASFGVNVTKSTTEENTYNIPCGKYQNPPHYEIESDASSATYPLAIAAITGTKCTVPNIGSASLQGDARFACDVLRPMGCTVEQTATSTTVQGPPKGTLKPLESIDMETMTDAFLTASVVAAVACNVSEGDPVTRITGIANQRVKECNRIAAMVHELAKFGVRTGELEDGIYIFGKNYKELKKPEEGIYTYDDHRIAMSFSVLSLICPSRTLIIDKACVEKTWPYWWDVLHQSFGVKLTGATSVASDPLKGSISKNASIILIGMRGAGKTTIGKIIAKQLNFKFLDLDELLEDYLEMPIAEVIFRMGWDAFRLEEHKVLRKFITEHPEGYVAASGGGVIEMDESRNLLSNFVKEGGIVLHVHRNLEHIKSYLSEDQTRPTYKDQESIDDVYKRRHVWYRECRSHYFISPVLSNQVIDEKIQYSMSRFLDVVTGSSQVLQKFKTKKRSTFLTLNYPRIEDALPTLRDVTVGCDAIEVRVDYLKDPKSSNGISSLDFVAEQISLLRCSTTLPIIFTIRTISQGGLFPNDKEEEAKELMLSAMRYGCDFVDVELGWSSETINILYQHKGYTKLIMSWHDLSGTWSWARPHEWMQKVELASSYADVIKLVGMANNLNDNLELEEFRTRITNSMDIPLILFNMGRFGQLSRILNKFMTPVTHPLLPSKAAPGQLTVKQLNEARVLIGEILPEKFFLFGKPIKHSRSPILHSTAYELLGLPHTYEAFETDTVDEVQKVLNLPDFGGANVTIPYKLSVMKFMDELSDEARFFGAVNTIIPIRIGDKLVLRGDNTDWRGIYDTFANALDGVSLRDTNGLVIGAGGTSRAAIYSLHRLGVSRIYLLNRTLANSYRVQDVFPPDYNIHIIDSDNIPSEELSSVTLSAVVSTIPADIELPEKVASVIKALLANKADGGVFLDMAYKPLHTPLMAVASDLEWKCCNGLEALVRQGLASFHLWTGMTAPFDAVYQKVIE.

The segment at 1-384 (MSNESNIITV…YEKHATVVSD (384 aa)) is 3-dehydroquinate synthase. NAD(+)-binding positions include 46–48 (DSN), 83–86 (ESSK), 114–116 (GGV), and D119. 7-phospho-2-dehydro-3-deoxy-D-arabino-heptonate is bound at residue R130. 139–140 (TT) is a binding site for NAD(+). 7-phospho-2-dehydro-3-deoxy-D-arabino-heptonate is bound by residues D146 and K152. K161 contributes to the NAD(+) binding site. A 7-phospho-2-dehydro-3-deoxy-D-arabino-heptonate-binding site is contributed by N162. NAD(+) is bound by residues 179–182 (FLHT) and N190. A Zn(2+)-binding site is contributed by E194. 7-phospho-2-dehydro-3-deoxy-D-arabino-heptonate is bound by residues 194 to 197 (EIIK) and K250. E260 serves as the catalytic Proton acceptor; for 3-dehydroquinate synthase activity. 7-phospho-2-dehydro-3-deoxy-D-arabino-heptonate is bound by residues 264-268 (RNLLN) and H271. Residue H271 coordinates Zn(2+). H275 serves as the catalytic Proton acceptor; for 3-dehydroquinate synthase activity. Residues H287 and K356 each contribute to the 7-phospho-2-dehydro-3-deoxy-D-arabino-heptonate site. Position 287 (H287) interacts with Zn(2+). Residues 397 to 843 (VDEFTKSSWD…WDVLHQSFGV (447 aa)) form an EPSP synthase region. Residue C825 is the For EPSP synthase activity of the active site. The shikimate kinase stretch occupies residues 863-1058 (NASIILIGMR…KTKKRSTFLT (196 aa)). Residue 870–877 (GMRGAGKT) participates in ATP binding. A 3-dehydroquinase region spans residues 1059–1280 (LNYPRIEDAL…AAPGQLTVKQ (222 aa)). Catalysis depends on H1182, which acts as the Proton acceptor; for 3-dehydroquinate dehydratase activity. K1211 (schiff-base intermediate with substrate; for 3-dehydroquinate dehydratase activity) is an active-site residue. The tract at residues 1293-1573 (PEKFFLFGKP…FDAVYQKVIE (281 aa)) is shikimate dehydrogenase.

In the N-terminal section; belongs to the sugar phosphate cyclases superfamily. Dehydroquinate synthase family. The protein in the 2nd section; belongs to the EPSP synthase family. It in the 3rd section; belongs to the shikimate kinase family. This sequence in the 4th section; belongs to the type-I 3-dehydroquinase family. In the C-terminal section; belongs to the shikimate dehydrogenase family. Homodimer. The cofactor is Zn(2+).

It is found in the cytoplasm. It catalyses the reaction 7-phospho-2-dehydro-3-deoxy-D-arabino-heptonate = 3-dehydroquinate + phosphate. The catalysed reaction is 3-dehydroquinate = 3-dehydroshikimate + H2O. The enzyme catalyses shikimate + NADP(+) = 3-dehydroshikimate + NADPH + H(+). It carries out the reaction shikimate + ATP = 3-phosphoshikimate + ADP + H(+). It catalyses the reaction 3-phosphoshikimate + phosphoenolpyruvate = 5-O-(1-carboxyvinyl)-3-phosphoshikimate + phosphate. It participates in metabolic intermediate biosynthesis; chorismate biosynthesis; chorismate from D-erythrose 4-phosphate and phosphoenolpyruvate: step 2/7. The protein operates within metabolic intermediate biosynthesis; chorismate biosynthesis; chorismate from D-erythrose 4-phosphate and phosphoenolpyruvate: step 3/7. It functions in the pathway metabolic intermediate biosynthesis; chorismate biosynthesis; chorismate from D-erythrose 4-phosphate and phosphoenolpyruvate: step 4/7. Its pathway is metabolic intermediate biosynthesis; chorismate biosynthesis; chorismate from D-erythrose 4-phosphate and phosphoenolpyruvate: step 5/7. It participates in metabolic intermediate biosynthesis; chorismate biosynthesis; chorismate from D-erythrose 4-phosphate and phosphoenolpyruvate: step 6/7. In terms of biological role, the AROM polypeptide catalyzes 5 consecutive enzymatic reactions in prechorismate polyaromatic amino acid biosynthesis. The sequence is that of Pentafunctional AROM polypeptide from Schizosaccharomyces pombe (strain 972 / ATCC 24843) (Fission yeast).